Consider the following 202-residue polypeptide: uncharacterized protein (202 aa).

Residues 175–195 (INTGIALFIILTSLLVYFIQF) traverse the membrane as a helical segment.

Its subcellular location is the membrane. This is an uncharacterized protein from Dictyostelium discoideum (Social amoeba).